The primary structure comprises 129 residues: Lysozyme C-2 (129 aa).

In terms of domain architecture, C-type lysozyme spans 1 to 129; it reads KVFERCELAR…VSSYVEGCTL (129 aa). Intrachain disulfides connect Cys-6-Cys-127, Cys-30-Cys-115, Cys-65-Cys-81, and Cys-77-Cys-95. Catalysis depends on residues Glu-35 and Asp-53.

It belongs to the glycosyl hydrolase 22 family. Monomer.

The enzyme catalyses Hydrolysis of (1-&gt;4)-beta-linkages between N-acetylmuramic acid and N-acetyl-D-glucosamine residues in a peptidoglycan and between N-acetyl-D-glucosamine residues in chitodextrins.. In terms of biological role, lysozymes have primarily a bacteriolytic function; those in tissues and body fluids are associated with the monocyte-macrophage system and enhance the activity of immunoagents. In Capra hircus (Goat), this protein is Lysozyme C-2.